Reading from the N-terminus, the 202-residue chain is Sterile alpha motif domain-containing protein 10 (202 aa).

The region spanning W118–R184 is the SAM domain.

The chain is Sterile alpha motif domain-containing protein 10 (SAMD10) from Homo sapiens (Human).